The chain runs to 436 residues: Chaperone protein dnaJ 16 (436 aa).

The J domain maps to aspartate 20–glycine 85. Residues threonine 291–glutamate 348 adopt a coiled-coil conformation. Residues lysine 360 to threonine 416 are disordered. Basic residues predominate over residues serine 362–alanine 377. Residues glutamate 385–glutamate 399 are compositionally biased toward acidic residues.

The protein belongs to the DnaJ family. B/II subfamily. In terms of tissue distribution, expressed constitutively in seedlings, roots, leaves, stems, flowers and siliques.

Its subcellular location is the membrane. Functionally, plays a continuous role in plant development probably in the structural organization of compartments. Seems to not be involved in gravitropism signaling pathway. The chain is Chaperone protein dnaJ 16 (ATJ16) from Arabidopsis thaliana (Mouse-ear cress).